We begin with the raw amino-acid sequence, 216 residues long: Small ribosomal subunit protein uS3 (216 aa).

In terms of domain architecture, KH type-2 spans 38-106 (LRKMLKDKLY…QANIEIKEVR (69 aa)).

The protein belongs to the universal ribosomal protein uS3 family. Part of the 30S ribosomal subunit. Forms a tight complex with proteins S10 and S14.

Binds the lower part of the 30S subunit head. Binds mRNA in the 70S ribosome, positioning it for translation. In Thermodesulfovibrio yellowstonii (strain ATCC 51303 / DSM 11347 / YP87), this protein is Small ribosomal subunit protein uS3.